Consider the following 368-residue polypeptide: MTVKLTIDCMGGDHGPSVTVPAAVNFVRSHPDAELLLVGIESAIRAQLKKLKAQDLPALTVVPASEIVAMDDPVEVALRKKKDSSMRVALNRVKEGEAQACVSAGNTGALMAVSRYVLKTLSGIERPAIASALPNPNGYTMMLDLGANVDCEPQHLLQFAEMGHALVSALEGKDRPTIGLLNIGEEVIKGNDTIKRAGELLRASTLNFHGNVEGNDIFKGTVDVIVCDGFVGNVALKTSEGLAQMLSNIIKEEFGRSWLTKVMAVLALPVLMRFKKRVDHRQYNGAALLGLRGLVIKSHGSADAYGFEWAIKRGYDAVKNGVLERLARAMEENAGSLEQAARDASGAGQASPIAGQPAEPYAAQSSKA.

Positions leucine 337–alanine 368 are disordered.

The protein belongs to the PlsX family. Homodimer. Probably interacts with PlsY.

Its subcellular location is the cytoplasm. The catalysed reaction is a fatty acyl-[ACP] + phosphate = an acyl phosphate + holo-[ACP]. It functions in the pathway lipid metabolism; phospholipid metabolism. Its function is as follows. Catalyzes the reversible formation of acyl-phosphate (acyl-PO(4)) from acyl-[acyl-carrier-protein] (acyl-ACP). This enzyme utilizes acyl-ACP as fatty acyl donor, but not acyl-CoA. This is Phosphate acyltransferase from Paraburkholderia phytofirmans (strain DSM 17436 / LMG 22146 / PsJN) (Burkholderia phytofirmans).